Reading from the N-terminus, the 181-residue chain is Inner membrane-spanning protein YciB (181 aa).

5 helical membrane passes run 3-23, 49-69, 76-96, 119-139, and 149-169; these read FLFDLFPVILFFITFKIYGIY, TMLWVSLVLIVVFGSATLILQ, WKPSVLYWLFAAALLIAQAIF, VNASWAAFFAFMGAANLYVAF, and FKLFGFMGLMLVFVVLQGLML.

This sequence belongs to the YciB family.

The protein localises to the cell inner membrane. Plays a role in cell envelope biogenesis, maintenance of cell envelope integrity and membrane homeostasis. This chain is Inner membrane-spanning protein YciB, found in Nitrosospira multiformis (strain ATCC 25196 / NCIMB 11849 / C 71).